Here is a 366-residue protein sequence, read N- to C-terminus: MQSSLPQFTFKWPKGPEAIILTGTFDDWKGTLPMVKDPSGAFEITLPVTFDSPSSKFYFKFIVDGQWLPSKDYKVNIDEGVENNFITEEDVIKQRENGSSTLVPESTGLAVSKNAPLIEPEAEKRAKKLRKFKIKRVIKTNKQTGERSIFSQEVVELPDSEDETQQVNKTGKNADGLSGTTTIIENNVGVNEEKAIKPYEENHPKVNLVKSEGYVTDGLGKTQSSESRLYELSAEDLEKEEEEEDEDKGGGKDTSTSADAEASEDQNKEPLSKSAKFEKPEEKVPVSSITSHAKETSVKPTGKVATETQTYETKQGAPTAAAKKIEAKKATRPSKPKGTKETPNKGVQKNPAKNGGFFKKLAQLLK.

Positions 159–180 (DSEDETQQVNKTGKNADGLSGT) are disordered. Serine 160 carries the phosphoserine modification. Residue threonine 216 is modified to Phosphothreonine. The tract at residues 217–366 (DGLGKTQSSE…FFKKLAQLLK (150 aa)) is disordered. Residues 233–247 (SAEDLEKEEEEEDED) are compositionally biased toward acidic residues. The span at 265–284 (DQNKEPLSKSAKFEKPEEKV) shows a compositional bias: basic and acidic residues. A Phosphoserine modification is found at serine 288. Lysine 314 is covalently cross-linked (Glycyl lysine isopeptide (Lys-Gly) (interchain with G-Cter in ubiquitin)).

This sequence belongs to the CRP1/MDG1 family.

It localises to the cell membrane. Functionally, involved in G-protein mediated signal transduction and in the regulation of polarized cell growth in pheromone-induced cells. This is Signal transduction protein MDG1 (MDG1) from Saccharomyces cerevisiae (strain YJM789) (Baker's yeast).